Reading from the N-terminus, the 256-residue chain is uncharacterized protein (256 aa).

Positions 1–22 are cleaved as a signal peptide; sequence MGYLKRFALYISVMILIFAIAG. A lipid anchor (N-palmitoyl cysteine) is attached at C23. C23 carries the S-diacylglycerol cysteine lipid modification.

The protein belongs to the staphylococcal tandem lipoprotein family.

The protein resides in the cell membrane. This is an uncharacterized protein from Staphylococcus aureus (strain COL).